The sequence spans 131 residues: Small ribosomal subunit protein bS6 (131 aa).

Positions Glu-98–Glu-131 are disordered. Basic and acidic residues predominate over residues Lys-104–Phe-116. Over residues Thr-120–Glu-131 the composition is skewed to acidic residues.

Belongs to the bacterial ribosomal protein bS6 family.

Its function is as follows. Binds together with bS18 to 16S ribosomal RNA. The sequence is that of Small ribosomal subunit protein bS6 from Klebsiella pneumoniae subsp. pneumoniae (strain ATCC 700721 / MGH 78578).